A 227-amino-acid chain; its full sequence is Thiocyanate methyltransferase 1 (227 aa).

4 residues coordinate S-adenosyl-L-methionine: tryptophan 36, tryptophan 40, tryptophan 47, and glycine 74. Residue serine 86 is modified to Phosphoserine. S-adenosyl-L-methionine-binding positions include aspartate 95, 123–124 (DV), and tyrosine 139.

Belongs to the class I-like SAM-binding methyltransferase superfamily. TPMT family. Expressed in shoots, leaves, stems, inflorescences, flowers and green siliques.

It carries out the reaction thiocyanate + S-adenosyl-L-methionine = methyl thiocyanate + S-adenosyl-L-homocysteine. S-adenosyl-L-methionine-dependent methyltransferase. Involved in glucosinolate metabolism and defense against phytopathogens. Highly reactive to thiocyanate (NCS(-)) derived from myrosinase-mediated hydrolysis of glucosinolates upon tissue damage. The polypeptide is Thiocyanate methyltransferase 1 (Arabidopsis thaliana (Mouse-ear cress)).